A 406-amino-acid polypeptide reads, in one-letter code: Kelch domain-containing protein 2 (406 aa).

Kelch repeat units follow at residues 31-85 (ERSG…NTEG), 92-136 (SGSC…ERID), 148-207 (LGVW…AWSQ), 221-259 (HACA…NELI), 271-311 (HSLT…IQFN), and 322-359 (HTAC…IFSV).

In terms of assembly, component of a CRL2(KLHDC2) E3 ubiquitin-protein ligase complex, also named ECS(KLHDC2) complex, composed of CUL2, Elongin BC (ELOB and ELOC), RBX1 and substrate-specific adapter KLHDC2. May form oligomers as a KLHDC2-ELOB-ELOC complex; this interaction is autoinhibitory for the E3 ligase complex as the substrate-binding site of KLHDC2 is blocked in the oligomer. Interacts with CREB3; interaction is direct and specific as it does not interact with CREB1, ATF4, ATF6, JUN, FOS, CEBPA or herpes simplex virus transactivator VP16. Autoubiquitinated by the CRL2(KLHDC2) E3 ligase complex.

It localises to the nucleus. It functions in the pathway protein modification; protein ubiquitination. Substrate-recognition component of a Cul2-RING (CRL2) E3 ubiquitin-protein ligase complex of the DesCEND (destruction via C-end degrons) pathway, which recognizes a C-degron located at the extreme C terminus of target proteins, leading to their ubiquitination and degradation. The C-degron recognized by the DesCEND pathway is usually a motif of less than ten residues and can be present in full-length proteins, truncated proteins or proteolytically cleaved forms. The CRL2(KLHDC2) complex specifically recognizes proteins with a diglycine (Gly-Gly) at the C-terminus, leading to their ubiquitination and degradation. The CRL2(KLHDC2) complex mediates ubiquitination and degradation of truncated SELENOK and SELENOS selenoproteins produced by failed UGA/Sec decoding, which end with a diglycine. The CRL2(KLHDC2) complex also recognizes proteolytically cleaved proteins ending with Gly-Gly, such as the N-terminal fragment of USP1, leading to their degradation. May also act as an indirect repressor of CREB3-mediated transcription by interfering with CREB3-DNA-binding. This is Kelch domain-containing protein 2 from Rattus norvegicus (Rat).